An 834-amino-acid chain; its full sequence is Probable basic-leucine zipper transcription factor D (834 aa).

Residues 83 to 160 (NNNNMLNDHS…SNNNSSSEGE (78 aa)) form a disordered region. Polar residues predominate over residues 90-111 (DHSSSPMRVPNSSPSLYNNSIE). Residues 119–157 (DNSNNNNNNNNNINVNDINVNDINSNSTNNNESNNNSSS) show a composition bias toward low complexity. A coiled-coil region spans residues 211–246 (SEQQQQQQQQQQQQQQQQQQQQQQQQQHQHLLQEHQ). The disordered stretch occupies residues 378-405 (VVDPPTHNQEDERNVKKQRRLIKNRESA). A bZIP domain is found at 391-454 (NVKKQRRLIK…KQLAAQNSNS (64 aa)). The basic motif stretch occupies residues 393 to 402 (KKQRRLIKNR). A leucine-zipper region spans residues 407–414 (LSRMRKKI). 2 disordered regions span residues 455–504 (NNNS…QQQS) and 550–712 (LSMS…KTPQ). Residues 550-595 (LSMSDSESSPQKSLRLSSNHHSLPDGTFNTIPIDQQTTATTNTKSL) are compositionally biased toward polar residues. Low complexity-rich tracts occupy residues 616–651 (NNNN…NNNN) and 694–707 (TTTT…TTST).

The protein belongs to the bZIP family.

It localises to the nucleus. Probable transcriptional regulator. This Dictyostelium discoideum (Social amoeba) protein is Probable basic-leucine zipper transcription factor D (bzpD).